We begin with the raw amino-acid sequence, 331 residues long: Adenosine deaminase (331 aa).

2 residues coordinate Zn(2+): His12 and His14. The substrate site is built by His14, Asp16, and Gly170. His197 is a binding site for Zn(2+). The Proton donor role is filled by Glu200. Asp278 provides a ligand contact to Zn(2+). Asp279 contributes to the substrate binding site.

It belongs to the metallo-dependent hydrolases superfamily. Adenosine and AMP deaminases family. Adenosine deaminase subfamily. It depends on Zn(2+) as a cofactor.

The catalysed reaction is adenosine + H2O + H(+) = inosine + NH4(+). It catalyses the reaction 2'-deoxyadenosine + H2O + H(+) = 2'-deoxyinosine + NH4(+). Catalyzes the hydrolytic deamination of adenosine and 2-deoxyadenosine. The sequence is that of Adenosine deaminase from Shewanella sp. (strain MR-4).